A 220-amino-acid chain; its full sequence is Translation initiation factor 6 (220 aa).

This sequence belongs to the eIF-6 family.

In terms of biological role, binds to the 50S ribosomal subunit and prevents its association with the 30S ribosomal subunit to form the 70S initiation complex. This chain is Translation initiation factor 6, found in Halobacterium salinarum (strain ATCC 29341 / DSM 671 / R1).